The primary structure comprises 422 residues: Alcohol dehydrogenase 4 (422 aa).

The transit peptide at 1–29 (MSILRSPFRLIRSPARFFPSLFHSSCNQS) directs the protein to the mitochondrion. Residues Asp82, Asn114, Gly141, Ser142, Thr181, Thr182, Thr190, Phe192, Lys203, and Gly225 each coordinate NAD(+). The Fe(2+) site is built by Asp237, His241, and His306. NAD(+) contacts are provided by His310 and His320. His320 provides a ligand contact to Fe(2+).

It belongs to the iron-containing alcohol dehydrogenase family. Requires Zn(2+) as cofactor.

It is found in the mitochondrion matrix. The enzyme catalyses a primary alcohol + NAD(+) = an aldehyde + NADH + H(+). The catalysed reaction is a secondary alcohol + NAD(+) = a ketone + NADH + H(+). It carries out the reaction ethanol + NAD(+) = acetaldehyde + NADH + H(+). Functionally, involved in ethanol oxidation in mitochondria. The sequence is that of Alcohol dehydrogenase 4 (adh4) from Schizosaccharomyces pombe (strain 972 / ATCC 24843) (Fission yeast).